Reading from the N-terminus, the 321-residue chain is Mas-related G-protein coupled receptor member D (321 aa).

The Extracellular portion of the chain corresponds to 1–8 (MNSTLDSS). N2 carries N-linked (GlcNAc...) asparagine glycosylation. The helical transmembrane segment at 9-29 (PAPGLTISPTMDLVTWIYFSV) threads the bilayer. T30 is a topological domain (cytoplasmic). The chain crosses the membrane as a helical span at residues 31-51 (FLAMATCVGGMAGNSLVIWLL). Residues 52–72 (SCNGMQRSPFCVYVLNLAVAD) are Extracellular-facing. The helical transmembrane segment at 73–93 (FLFLFCMASMLSLETGPLLIV) threads the bilayer. The Cytoplasmic segment spans residues 94–146 (NISAKIYEGMRRIKYFAYTAGLSLLTAISTQRCLSVLFPIWYKCHRPRHLSSV). Residues 147-167 (VSGALWALAFLMNFLASFFCV) form a helical membrane-spanning segment. Over 168–181 (QFWHPNKHQCFKVD) the chain is Extracellular. The helical transmembrane segment at 182-202 (IVFNSLILGIFMPVMILTSTI) threads the bilayer. Residues 203–220 (LFIRVRKNSLMQRRRPRR) lie on the Cytoplasmic side of the membrane. A helical membrane pass occupies residues 221–241 (LYVVILTSILVFLTCSLPLGI). Residues 242–260 (NWFLLYWVDVKRDVRLLYS) are Extracellular-facing. Residues 261 to 281 (CVSRFSSSLSSSANPVIYFLV) traverse the membrane as a helical segment. Residues 282–321 (GSQKSHRLQESLGAVLGRALRDEPEPEGRETPSTCTNDGV) lie on the Cytoplasmic side of the membrane. Positions 302 to 311 (RDEPEPEGRE) are enriched in basic and acidic residues. Residues 302–321 (RDEPEPEGRETPSTCTNDGV) form a disordered region. Residues 312–321 (TPSTCTNDGV) are compositionally biased toward polar residues.

The protein belongs to the G-protein coupled receptor 1 family. Mas subfamily. In terms of tissue distribution, expressed in a subset of sensory neurons that includes nociceptors. Expressed in the subclass of non-peptidergic sensory neurons that are IB4(+) and VR1(-).

The protein resides in the cell membrane. Its function is as follows. May regulate nociceptor function and/or development, including the sensation or modulation of pain. Functions as a specific membrane receptor for beta-alanine. The receptor couples with G-protein G(q) and G(i). This chain is Mas-related G-protein coupled receptor member D (Mrgprd), found in Mus musculus (Mouse).